Consider the following 261-residue polypeptide: Type III pantothenate kinase (261 aa).

Aspartate 6 to valine 13 contributes to the ATP binding site. Residue glycine 107–arginine 110 coordinates substrate. Residue aspartate 109 is the Proton acceptor of the active site. Residue aspartate 129 participates in K(+) binding. Threonine 132 is an ATP binding site. Position 183 (threonine 183) interacts with substrate.

It belongs to the type III pantothenate kinase family. As to quaternary structure, homodimer. NH4(+) serves as cofactor. Requires K(+) as cofactor.

The protein localises to the cytoplasm. The catalysed reaction is (R)-pantothenate + ATP = (R)-4'-phosphopantothenate + ADP + H(+). Its pathway is cofactor biosynthesis; coenzyme A biosynthesis; CoA from (R)-pantothenate: step 1/5. Catalyzes the phosphorylation of pantothenate (Pan), the first step in CoA biosynthesis. This Kosmotoga olearia (strain ATCC BAA-1733 / DSM 21960 / TBF 19.5.1) protein is Type III pantothenate kinase.